Here is a 325-residue protein sequence, read N- to C-terminus: Elongation factor P--(R)-beta-lysine ligase (325 aa).

A substrate-binding site is contributed by 76-78; it reads SPE. ATP-binding positions include 100–102 and N109; that span reads RNE. Position 118 (Y118) interacts with substrate. 244-245 lines the ATP pocket; that stretch reads EL. Substrate is bound at residue E251. Residue G300 coordinates ATP.

Belongs to the class-II aminoacyl-tRNA synthetase family. EpmA subfamily. In terms of assembly, homodimer.

It catalyses the reaction D-beta-lysine + L-lysyl-[protein] + ATP = N(6)-((3R)-3,6-diaminohexanoyl)-L-lysyl-[protein] + AMP + diphosphate + H(+). Functionally, with EpmB is involved in the beta-lysylation step of the post-translational modification of translation elongation factor P (EF-P) on 'Lys-34'. Catalyzes the ATP-dependent activation of (R)-beta-lysine produced by EpmB, forming a lysyl-adenylate, from which the beta-lysyl moiety is then transferred to the epsilon-amino group of EF-P 'Lys-34'. This chain is Elongation factor P--(R)-beta-lysine ligase, found in Escherichia coli O139:H28 (strain E24377A / ETEC).